The following is a 714-amino-acid chain: Kinesin-like protein KIN-13 (714 aa).

Residues 1–63 form the SAM domain; that stretch reads MSDLVYQWLE…FRLITTLKSR (63 aa). Residues 69–81 show a composition bias toward polar residues; it reads QQPSAPNTGATPQ. Disordered stretches follow at residues 69-109 and 122-161; these read QQPS…NDIQ and GGYE…NPRG. Residues 82-92 show a composition bias toward low complexity; sequence SVPSSHVSPHV. Positions 151 to 160 are enriched in pro residues; the sequence is PNAPNPPNPR. The Kinesin motor domain occupies 183-515; the sequence is RIRVVIRKRP…LRYADRVKEL (333 aa). 273–280 contributes to the ATP binding site; that stretch reads GQTGSGKS.

Belongs to the TRAFAC class myosin-kinesin ATPase superfamily. Kinesin family. KIN-13 subfamily. As to quaternary structure, interacts with PLK. Post-translationally, phosphorylated by PLK.

The protein localises to the cytoplasm. It localises to the cytoskeleton. The protein resides in the cell projection. Its subcellular location is the cilium. It is found in the flagellum. The protein localises to the flagellum basal body. It localises to the flagellum axoneme. The protein resides in the spindle. Its subcellular location is the chromosome. It is found in the centromere. The protein localises to the kinetochore. Its function is as follows. Involved in cell cycle. Involved in formation of flagella, regulation of flagellar length, and formation of median bodies during interphase. Regulates flagellar length in all eight distal flagellar tips by promoting disassembly of the microtubules. Disassembles microtubules at the distal flagellar tips in a length-dependent manner in order to maintain different equilibrium lengths of the four flagellar pairs. Regulates interphase and mitotic microtubule dynamics. Regulates microtubule disassembly dynamics of the dual mitotic spindles and the median body. This is Kinesin-like protein KIN-13 from Giardia intestinalis (strain ATCC 50803 / WB clone C6) (Giardia lamblia).